The primary structure comprises 285 residues: Phosphate import ATP-binding protein PstB (285 aa).

The ABC transporter domain maps to 39–280 (LEVSDLQLWY…PAKKQTEDYI (242 aa)). 71-78 (GPSGCGKS) contributes to the ATP binding site.

This sequence belongs to the ABC transporter superfamily. Phosphate importer (TC 3.A.1.7) family. The complex is composed of two ATP-binding proteins (PstB), two transmembrane proteins (PstC and PstA) and a solute-binding protein (PstS).

The protein localises to the cell inner membrane. The catalysed reaction is phosphate(out) + ATP + H2O = ADP + 2 phosphate(in) + H(+). Its function is as follows. Part of the ABC transporter complex PstSACB involved in phosphate import. Responsible for energy coupling to the transport system. This is Phosphate import ATP-binding protein PstB from Alkalilimnicola ehrlichii (strain ATCC BAA-1101 / DSM 17681 / MLHE-1).